A 254-amino-acid polypeptide reads, in one-letter code: Pimeloyl-[acyl-carrier protein] methyl ester esterase (254 aa).

The AB hydrolase-1 domain occupies 14-242 (LVLLHGWGMN…ASHAPFISHP (229 aa)). Substrate-binding positions include tryptophan 20, 82–83 (SL), and 143–147 (FLAIQ). Serine 82 functions as the Nucleophile in the catalytic mechanism. Active-site residues include aspartate 207 and histidine 235. Histidine 235 is a substrate binding site.

This sequence belongs to the AB hydrolase superfamily. Carboxylesterase BioH family. As to quaternary structure, monomer.

Its subcellular location is the cytoplasm. The catalysed reaction is 6-carboxyhexanoyl-[ACP] methyl ester + H2O = 6-carboxyhexanoyl-[ACP] + methanol + H(+). It participates in cofactor biosynthesis; biotin biosynthesis. Its function is as follows. The physiological role of BioH is to remove the methyl group introduced by BioC when the pimeloyl moiety is complete. It allows to synthesize pimeloyl-ACP via the fatty acid synthetic pathway through the hydrolysis of the ester bonds of pimeloyl-ACP esters. The polypeptide is Pimeloyl-[acyl-carrier protein] methyl ester esterase (Aeromonas salmonicida (strain A449)).